Consider the following 214-residue polypeptide: Ribosomal RNA small subunit methyltransferase G (214 aa).

S-adenosyl-L-methionine contacts are provided by residues Gly77, Leu82, 128–129 (VE), and Arg143.

It belongs to the methyltransferase superfamily. RNA methyltransferase RsmG family.

It is found in the cytoplasm. It catalyses the reaction guanosine(527) in 16S rRNA + S-adenosyl-L-methionine = N(7)-methylguanosine(527) in 16S rRNA + S-adenosyl-L-homocysteine. Specifically methylates the N7 position of guanine in position 527 of 16S rRNA. The sequence is that of Ribosomal RNA small subunit methyltransferase G from Nitrosomonas eutropha (strain DSM 101675 / C91 / Nm57).